Reading from the N-terminus, the 27-residue chain is Protamine-B (27 aa).

The disordered stretch occupies residues Ala-1–Arg-27.

In terms of tissue distribution, testis.

The protein resides in the nucleus. Its subcellular location is the chromosome. Its function is as follows. Protamines substitute for histones in the chromatin of sperm during the haploid phase of spermatogenesis. They compact sperm DNA into a highly condensed, stable and inactive complex. This is Protamine-B from Acipenser stellatus (Sevruga).